The sequence spans 392 residues: MNDLNVLVLEDEPFQRLVAVTALKKVVPGSILEAADGKEAVAILESCGHVDIAICDLQMSGMDGLAFLRHASLSGKVHSVILSSEVDPILRQATISMIECLGLNFLGDLGKPFSLERITALLTRYNARRQDLPRQIEVAELPSVADVVRGLDNGEFEAYYQPKVALDGGGLIGAEVLARWNHPHLGVLPPSHFLYVMETYNLVDKLFWQLFSQGLATRRKLAQLGQPINLAFNVHPSQLGSRALAENISALLTEFHLPPSSVMFEITETGLISAPASSLENLVRLRIMGCGLAMDDFGAGYSSLDRLCEFPFSQIKLDRTFVQKMKTQPRSCAVISSVVALAQALGISLVVEGVESDEQRVRLIELGCSIAQGYLFARPMPEQHFLDYCSGS.

The Response regulatory domain occupies 5 to 126 (NVLVLEDEPF…RITALLTRYN (122 aa)). Position 56 is a 4-aspartylphosphate (Asp56). The EAL domain occupies 140 to 392 (ELPSVADVVR…QHFLDYCSGS (253 aa)). The Mg(2+) site is built by Glu175, Asn233, Glu265, and Asp295. Glu352 serves as the catalytic Proton acceptor.

Homotetramer. Exhibits a highly unusual tetrameric structure arranged around a single dyad, with the four subunits adopting two distinctly different conformations, with only two active sites accessible for substrate binding. Interacts with RocS1. Mg(2+) serves as cofactor.

The catalysed reaction is 3',3'-c-di-GMP + H2O = 5'-phosphoguanylyl(3'-&gt;5')guanosine + H(+). Phosphorylation of Asp-56 probably induces local conformational changes in the response regulatory domain. These structural changes are transmitted to the adjacent EAL domain, then the signal is further transmitted down to the active site. The phosphodiesterase activity is inhibited by Ca(2+) and Zn(2+). Phosphodiesterase activity is inhibited by a benzoisothiazolinone derivative that specifically inhibited RocR, but not some other phosphodiesterases. Functionally, phosphodiesterase (PDE) that catalyzes the hydrolysis of cyclic diguanylate (c-di-GMP) to 5'-pGpG. Cannot use cyclic AMP or cyclic GMP. Part of the RocSAR two-component regulatory signaling system (also known as the SadARS system), which regulates biofilm maturation, type III secretion and expression of the cup fimbrial-gene cluster. Negatively regulates the expression of cup genes by antagonizing the activity of RocA1. This Pseudomonas aeruginosa (strain ATCC 15692 / DSM 22644 / CIP 104116 / JCM 14847 / LMG 12228 / 1C / PRS 101 / PAO1) protein is Cyclic di-GMP phosphodiesterase RocR.